Reading from the N-terminus, the 230-residue chain is Ion-translocating oxidoreductase complex subunit E (230 aa).

Helical transmembrane passes span 39–59 (LGLG…VSLV), 69–89 (IPVF…LMNA), 93–113 (GLYL…IIIG), 124–144 (VLPA…VLVV), and 182–202 (AFLL…LIAA).

This sequence belongs to the NqrDE/RnfAE family. As to quaternary structure, the complex is composed of six subunits: RnfA, RnfB, RnfC, RnfD, RnfE and RnfG.

It is found in the cell inner membrane. Its function is as follows. Part of a membrane-bound complex that couples electron transfer with translocation of ions across the membrane. The polypeptide is Ion-translocating oxidoreductase complex subunit E (Vibrio cholerae serotype O1 (strain ATCC 39315 / El Tor Inaba N16961)).